Here is a 495-residue protein sequence, read N- to C-terminus: Potassium voltage-gated channel subfamily A member 1 (495 aa).

A disordered region spans residues 1–30 (MTVMSGENADEASTAPGHPQDGSYPRQADH). Residues 1–128 (MTVMSGENAD…FYELGEEAME (128 aa)) form a tetramerization domain region. Topologically, residues 1-164 (MTVMSGENAD…LLFEYPESSG (164 aa)) are cytoplasmic. Serine 23 carries the post-translational modification Phosphoserine. The chain crosses the membrane as a helical span at residues 165–186 (PARVIAIVSVMVILISIVIFCL). The Extracellular portion of the chain corresponds to 187–220 (ETLPELKDDKDFTGTIHRIDNTTVIYTSNIFTDP). N-linked (GlcNAc...) asparagine glycosylation is present at asparagine 207. Residues 221 to 242 (FFIVETLCIIWFSFELVVRFFA) traverse the membrane as a helical segment. Residue cysteine 243 is the site of S-palmitoyl cysteine attachment. Topologically, residues 243–253 (CPSKTDFFKNI) are cytoplasmic. The helical transmembrane segment at 254–274 (MNFIDIVAIIPYFITLGTEIA) threads the bilayer. Over 275 to 287 (EQEGNQKGEQATS) the chain is Extracellular. Residues 288-308 (LAILRVIRLVRVFRIFKLSRH) form a helical; Voltage-sensor membrane-spanning segment. At 309-323 (SKGLQILGQTLKASM) the chain is on the cytoplasmic side. An S4-S5 linker region spans residues 310–323 (KGLQILGQTLKASM). Serine 322 carries the post-translational modification Phosphoserine; by PKA. Residues 324–345 (RELGLLIFFLFIGVILFSSAVY) traverse the membrane as a helical segment. Topologically, residues 346 to 359 (FAEAEEAESHFSSI) are extracellular. Residues 360-371 (PDAFWWAVVSMT) constitute an intramembrane region (helical). A Selectivity filter motif is present at residues 372–377 (TVGYGD). Residues 372-379 (TVGYGDMY) lie within the membrane without spanning it. Topologically, residues 380-386 (PVTIGGK) are extracellular. Residues 387-415 (IVGSLCAIAGVLTIALPVPVIVSNFNYFY) form a helical membrane-spanning segment. Topologically, residues 416–495 (HRETEGEEQA…VNKSKLLTDV (80 aa)) are cytoplasmic. Phosphoserine occurs at positions 437 and 439. Serine 446 is modified (phosphoserine; by PKA). A PDZ-binding motif is present at residues 493 to 495 (TDV).

The protein belongs to the potassium channel family. A (Shaker) (TC 1.A.1.2) subfamily. Kv1.1/KCNA1 sub-subfamily. As to quaternary structure, homotetramer and heterotetramer with other channel-forming alpha subunits, such as KCNA2, KCNA4, KCNA5, KCNA6 and KCNA7. Channel activity is regulated by interaction with the beta subunits KCNAB1 and KCNAB2. Identified in a complex with KCNA2 and KCNAB2. Interacts (via C-terminus) with the PDZ domains of DLG1, DLG2 and DLG4. Interacts with LGI1 within a complex containing LGI1, KCNA4 and KCNAB1. Interacts (via N-terminus) with STX1A; this promotes channel inactivation. Interacts (via N-terminus) with the heterodimer formed by GNB1 and GNG2; this promotes channel inactivation. Can interact simultaneously with STX1A and the heterodimer formed by GNB1 and GNG2. Interacts (via cytoplasmic N-terminal domain) with KCNRG; this inhibits channel activity. Interacts with ANK3; this inhibits channel activity. Interacts with ADAM11. N-glycosylated. In terms of processing, palmitoylated on Cys-243; which may be required for membrane targeting. Post-translationally, phosphorylated on tyrosine residues. Phosphorylation increases in response to NRG1; this inhibits channel activity. Phosphorylation at Ser-446 regulates channel activity by down-regulating expression at the cell membrane. In terms of tissue distribution, detected in brain. Expressed in cerebellar cortex basket cell terminals, the area surround the Purkinje cell soma, and the pinceaux expansions encircling the axon initial segment (at protein level). Detected in the juxtaparanodal regions of the nodes of Ranvier in myelinated axons. Detected in the paranodal region in sciatic nerve. Detected on cell bodies in cerebellum, dorsal and ventral cochlear nucleus, pontine reticular nucleus, mesencephalic trigeminal nucleus, motor trigeminal nucleus and the pricipal sensory trigeminal nucleus. Detected in terminal fields of basket cells in the cerebellum corpus medullare. Detected in hippocampus CA3 pyramidal neurons and in the hilus and stratum moleculare of the dentate gyrus. Detected in the central nucleus and the external nucleus of the inferior colliculus. Detected in fiber tracts in the optic tract, external medullary lamina, stria terminalis, medulla, ventral pallidum and substantia nigra. Detected in neurons from dorsal root ganglion. Detected in neurons in the medial nucleus of the trapezoid body. Detected in midbrain dopamine neuron axon terminals. Detected in brain cortex. Detected in brainstem. Detected in juxtaparanodal regions of the nodes of Ranvier in the vagus nerve, but only at very low levels in the heart. Detected in the islet of Langerhans. Detected at the luminal membrane in distal convoluted tubules in the kidney (at protein level). Detected in hippocampus, thalamus, neocortex and ventral brain cortex, including the piriform and entorhinal cortex and the amygdala. Detected in midbrain dopamine neurons. Detected in heart atrium, ventricle, sinoatrial node and atrioventricular node.

The protein resides in the cell membrane. It is found in the cell projection. The protein localises to the axon. Its subcellular location is the membrane. It localises to the perikaryon. The protein resides in the dendrite. It is found in the cell junction. The protein localises to the synapse. Its subcellular location is the cytoplasmic vesicle. It localises to the endoplasmic reticulum. The protein resides in the presynaptic cell membrane. It is found in the presynapse. It catalyses the reaction K(+)(in) = K(+)(out). With respect to regulation, inhibited by 4-aminopyridine (4-AP), tetraethylammonium (TEA) and dendrotoxin (DTX), but not by charybdotoxin (CTX). Its function is as follows. Voltage-gated potassium channel that mediates transmembrane potassium transport in excitable membranes, primarily in the brain and the central nervous system, but also in the kidney. Contributes to the regulation of the membrane potential and nerve signaling, and prevents neuronal hyperexcitability. Forms tetrameric potassium-selective channels through which potassium ions pass in accordance with their electrochemical gradient. The channel alternates between opened and closed conformations in response to the voltage difference across the membrane. Can form functional homotetrameric channels and heterotetrameric channels that contain variable proportions of KCNA1, KCNA2, KCNA4, KCNA5, KCNA6, KCNA7, and possibly other family members as well; channel properties depend on the type of alpha subunits that are part of the channel. Channel properties are modulated by cytoplasmic beta subunits that regulate the subcellular location of the alpha subunits and promote rapid inactivation of delayed rectifier potassium channels. In vivo, membranes probably contain a mixture of heteromeric potassium channel complexes, making it difficult to assign currents observed in intact tissues to any particular potassium channel family member. Homotetrameric KCNA1 forms a delayed-rectifier potassium channel that opens in response to membrane depolarization, followed by slow spontaneous channel closure. In contrast, a heterotetrameric channel formed by KCNA1 and KCNA4 shows rapid inactivation. Regulates neuronal excitability in hippocampus, especially in mossy fibers and medial perforant path axons, preventing neuronal hyperexcitability. May function as down-stream effector for G protein-coupled receptors and inhibit GABAergic inputs to basolateral amygdala neurons. May contribute to the regulation of neurotransmitter release, such as gamma-aminobutyric acid (GABA) release. Plays a role in regulating the generation of action potentials and preventing hyperexcitability in myelinated axons of the vagus nerve, and thereby contributes to the regulation of heart contraction. Required for normal neuromuscular responses. Regulates the frequency of neuronal action potential firing in response to mechanical stimuli, and plays a role in the perception of pain caused by mechanical stimuli, but does not play a role in the perception of pain due to heat stimuli. Required for normal responses to auditory stimuli and precise location of sound sources, but not for sound perception. The use of toxins that block specific channels suggest that it contributes to the regulation of the axonal release of the neurotransmitter dopamine. Required for normal postnatal brain development and normal proliferation of neuronal precursor cells in the brain. Plays a role in the reabsorption of Mg(2+) in the distal convoluted tubules in the kidney and in magnesium ion homeostasis, probably via its effect on the membrane potential. The polypeptide is Potassium voltage-gated channel subfamily A member 1 (Mus musculus (Mouse)).